The following is an 819-amino-acid chain: Zinc finger protein 658B (819 aa).

A C2H2-type 1; degenerate zinc finger spans residues 141–166 (YLSDEHGKCRKSFYWKAHLIQHERPH). 14 C2H2-type zinc fingers span residues 200-222 (YECN…LRIH), 278-300 (YECI…QRIH), 306-328 (YECV…QRVH), 334-356 (YECN…QRIH), 362-384 (YECS…HRIH), 390-412 (YECN…QRIH), 418-440 (YECN…QRIH), 446-468 (YECS…QRIH), 474-496 (YKCN…QNIH), 502-524 (YECS…RRIH), 530-552 (YECS…ERIH), 558-580 (YECN…QRIH), 586-608 (YECN…QRIH), and 614-636 (YECN…HRIH). Residues 642–664 (YECNDCGKTFSKTSHLRAHLRTR) form a C2H2-type 16; degenerate zinc finger. 5 consecutive C2H2-type zinc fingers follow at residues 670–692 (YECS…QRVH), 698–720 (YECN…QRIH), 726–748 (YECN…QRIH), 754–776 (YECN…QRIH), and 782–805 (YECD…TRMH).

This sequence belongs to the krueppel C2H2-type zinc-finger protein family.

Its subcellular location is the nucleus. In terms of biological role, may be involved in transcriptional regulation. This is Zinc finger protein 658B (ZNF658B) from Homo sapiens (Human).